We begin with the raw amino-acid sequence, 873 residues long: DNA mismatch repair protein MutS (873 aa).

Residues 1–34 form a disordered region; the sequence is MAAIPTPRLHRGVTHLSRQTKSRARHPMSTPQHT. Basic residues predominate over residues 8–26; it reads RLHRGVTHLSRQTKSRARH. An ATP-binding site is contributed by 635 to 642; it reads GPNMGGKS.

The protein belongs to the DNA mismatch repair MutS family.

Functionally, this protein is involved in the repair of mismatches in DNA. It is possible that it carries out the mismatch recognition step. This protein has a weak ATPase activity. The sequence is that of DNA mismatch repair protein MutS from Chromobacterium violaceum (strain ATCC 12472 / DSM 30191 / JCM 1249 / CCUG 213 / NBRC 12614 / NCIMB 9131 / NCTC 9757 / MK).